Here is a 529-residue protein sequence, read N- to C-terminus: NAD(P)H-quinone oxidoreductase chain 4 1 (529 aa).

The next 13 membrane-spanning stretches (helical) occupy residues 4–24 (FPWL…IPFI), 36–56 (WYAL…FTNF), 91–111 (LILL…PVTL), 115–135 (LFYF…AVQD), 137–157 (LVFF…LAIW), 169–189 (FILY…AMAF), 209–229 (GFQL…LPIV), 243–263 (TAPV…YALI), 277–297 (FAPV…LTSY), 314–334 (IGFV…GAVL), 335–355 (QMVS…ATYD), 387–407 (LALP…GFAT), and 417–437 (VIVV…LLSM).

This sequence belongs to the complex I subunit 4 family.

The protein resides in the cellular thylakoid membrane. It carries out the reaction a plastoquinone + NADH + (n+1) H(+)(in) = a plastoquinol + NAD(+) + n H(+)(out). The catalysed reaction is a plastoquinone + NADPH + (n+1) H(+)(in) = a plastoquinol + NADP(+) + n H(+)(out). Its function is as follows. NDH-1 shuttles electrons from NAD(P)H, via FMN and iron-sulfur (Fe-S) centers, to quinones in the respiratory chain. The immediate electron acceptor for the enzyme in this species is believed to be plastoquinone. Couples the redox reaction to proton translocation (for every two electrons transferred, four hydrogen ions are translocated across the cytoplasmic membrane), and thus conserves the redox energy in a proton gradient. The polypeptide is NAD(P)H-quinone oxidoreductase chain 4 1 (Thermosynechococcus vestitus (strain NIES-2133 / IAM M-273 / BP-1)).